Consider the following 397-residue polypeptide: Lysophospholipid transporter LplT (397 aa).

At 1–17 (MSESVHTNTSLWSKGMK) the chain is on the periplasmic side. The helical transmembrane segment at 18–38 (AVIVAQFLSAFGDNALLFATL) threads the bilayer. Residues 39 to 52 (ALLKAQFYPEWSQP) are Cytoplasmic-facing. A helical membrane pass occupies residues 53–73 (ILQMVFVGAYILFAPFVGQVA). Residues 74-90 (DSFAKGRVMMFANGLKL) are Periplasmic-facing. Residues 91–111 (LGAASICFGINPFLGYTLVGV) form a helical membrane-spanning segment. Topologically, residues 112-144 (GAAAYSPAKYGILGELTTGSKLVKANGLMEAST) are cytoplasmic. A helical membrane pass occupies residues 145–165 (IAAILLGSVAGGVLADWHILV). Ala-166 is a topological domain (periplasmic). The chain crosses the membrane as a helical span at residues 167 to 187 (LAACALAYGGAVVANIYIPKL). The Cytoplasmic segment spans residues 188–226 (AAARPGQSWNLISMTRSFLNACTSLWRNGETRFSLVGTS). The chain crosses the membrane as a helical span at residues 227-247 (LFWGAGVTLRFLLVLWVPVAL). Over 248 to 256 (GITDNATPT) the chain is Periplasmic. Residues 257–277 (YLNAMVAIGIVVGAGAAAKLV) form a helical membrane-spanning segment. Over 278-280 (TLE) the chain is Cytoplasmic. The chain crosses the membrane as a helical span at residues 281-301 (TVSRCMPAGILIGVVVLIFSL). Over 302-304 (QHE) the chain is Periplasmic. Residues 305 to 325 (LLPAYALLMLIGVLGGFFVVP) form a helical membrane-spanning segment. Residues 326 to 343 (LNALLQERGKKSVGAGNA) are Cytoplasmic-facing. A helical membrane pass occupies residues 344–364 (IAVQNLGENSAMLLMLGIYSL). At 365–366 (AV) the chain is on the periplasmic side. The helical transmembrane segment at 367–387 (MVGIPVVPIGIGFGALFALAI) threads the bilayer. Over 388–397 (TALWIWQRRH) the chain is Cytoplasmic.

Belongs to the major facilitator superfamily. LplT (TC 2.A.1.42) family.

It localises to the cell inner membrane. In terms of biological role, catalyzes the facilitated diffusion of 2-acyl-glycero-3-phosphoethanolamine (2-acyl-GPE) into the cell. The polypeptide is Lysophospholipid transporter LplT (Escherichia coli O6:K15:H31 (strain 536 / UPEC)).